The primary structure comprises 202 residues: Small ribosomal subunit protein uS4 (202 aa).

The interval 17–42 is disordered; that stretch reads ELPGLSRKTPRRAYPPGQHGQARKKR. Residues 90–152 enclose the S4 RNA-binding domain; the sequence is MRLDNTIFRL…DASRKLIETH (63 aa).

Belongs to the universal ribosomal protein uS4 family. Part of the 30S ribosomal subunit. Contacts protein S5. The interaction surface between S4 and S5 is involved in control of translational fidelity.

In terms of biological role, one of the primary rRNA binding proteins, it binds directly to 16S rRNA where it nucleates assembly of the body of the 30S subunit. Functionally, with S5 and S12 plays an important role in translational accuracy. The chain is Small ribosomal subunit protein uS4 from Acaryochloris marina (strain MBIC 11017).